Consider the following 274-residue polypeptide: Dermonecrotic toxin LarSicTox-alphaIV1 (274 aa).

His-5 is an active-site residue. The Mg(2+) site is built by Glu-25 and Asp-27. The active-site Nucleophile is the His-41. 2 disulfides stabilise this stretch: Cys-45-Cys-51 and Cys-47-Cys-192. Position 85 (Asp-85) interacts with Mg(2+).

This sequence belongs to the arthropod phospholipase D family. Class II subfamily. Mg(2+) is required as a cofactor. Expressed by the venom gland.

The protein localises to the secreted. The enzyme catalyses an N-(acyl)-sphingosylphosphocholine = an N-(acyl)-sphingosyl-1,3-cyclic phosphate + choline. It catalyses the reaction an N-(acyl)-sphingosylphosphoethanolamine = an N-(acyl)-sphingosyl-1,3-cyclic phosphate + ethanolamine. The catalysed reaction is a 1-acyl-sn-glycero-3-phosphocholine = a 1-acyl-sn-glycero-2,3-cyclic phosphate + choline. It carries out the reaction a 1-acyl-sn-glycero-3-phosphoethanolamine = a 1-acyl-sn-glycero-2,3-cyclic phosphate + ethanolamine. Dermonecrotic toxins cleave the phosphodiester linkage between the phosphate and headgroup of certain phospholipids (sphingolipid and lysolipid substrates), forming an alcohol (often choline) and a cyclic phosphate. This toxin acts on sphingomyelin (SM). It may also act on ceramide phosphoethanolamine (CPE), lysophosphatidylcholine (LPC) and lysophosphatidylethanolamine (LPE), but not on lysophosphatidylserine (LPS), and lysophosphatidylglycerol (LPG). It acts by transphosphatidylation, releasing exclusively cyclic phosphate products as second products. Induces dermonecrosis, hemolysis, increased vascular permeability, edema, inflammatory response, and platelet aggregation. This is Dermonecrotic toxin LarSicTox-alphaIV1 from Loxosceles arizonica (Arizona brown spider).